Consider the following 292-residue polypeptide: Phosphatidylserine decarboxylase proenzyme (292 aa).

Residues aspartate 89, histidine 146, and serine 252 each act as charge relay system; for autoendoproteolytic cleavage activity in the active site. Residue serine 252 is the Schiff-base intermediate with substrate; via pyruvic acid; for decarboxylase activity of the active site. Pyruvic acid (Ser); by autocatalysis is present on serine 252.

It belongs to the phosphatidylserine decarboxylase family. PSD-B subfamily. Prokaryotic type I sub-subfamily. Heterodimer of a large membrane-associated beta subunit and a small pyruvoyl-containing alpha subunit. Pyruvate serves as cofactor. Post-translationally, is synthesized initially as an inactive proenzyme. Formation of the active enzyme involves a self-maturation process in which the active site pyruvoyl group is generated from an internal serine residue via an autocatalytic post-translational modification. Two non-identical subunits are generated from the proenzyme in this reaction, and the pyruvate is formed at the N-terminus of the alpha chain, which is derived from the carboxyl end of the proenzyme. The autoendoproteolytic cleavage occurs by a canonical serine protease mechanism, in which the side chain hydroxyl group of the serine supplies its oxygen atom to form the C-terminus of the beta chain, while the remainder of the serine residue undergoes an oxidative deamination to produce ammonia and the pyruvoyl prosthetic group on the alpha chain. During this reaction, the Ser that is part of the protease active site of the proenzyme becomes the pyruvoyl prosthetic group, which constitutes an essential element of the active site of the mature decarboxylase.

Its subcellular location is the cell membrane. It carries out the reaction a 1,2-diacyl-sn-glycero-3-phospho-L-serine + H(+) = a 1,2-diacyl-sn-glycero-3-phosphoethanolamine + CO2. The protein operates within phospholipid metabolism; phosphatidylethanolamine biosynthesis; phosphatidylethanolamine from CDP-diacylglycerol: step 2/2. Catalyzes the formation of phosphatidylethanolamine (PtdEtn) from phosphatidylserine (PtdSer). In Shewanella sp. (strain ANA-3), this protein is Phosphatidylserine decarboxylase proenzyme.